A 738-amino-acid polypeptide reads, in one-letter code: Sporulation kinase E (738 aa).

4 consecutive PAS domains span residues 29 to 99 (ELNQ…FKKG), 150 to 220 (NEQL…NRKG), 271 to 342 (SEER…YGEI), and 391 to 462 (SELK…FDEM). The region spanning 523–729 (GIAHEIRNPM…VFHITLPVRQ (207 aa)) is the Histidine kinase domain. His-526 bears the Phosphohistidine; by autocatalysis mark.

It carries out the reaction ATP + protein L-histidine = ADP + protein N-phospho-L-histidine.. Its function is as follows. Phosphorylates the sporulation-regulatory protein spo0A under biofilm growth conditions. Also able to weakly phosphorylate spo0F. The chain is Sporulation kinase E (kinE) from Bacillus subtilis (strain 168).